A 365-amino-acid polypeptide reads, in one-letter code: c-di-GMP synthase (365 aa).

This sequence belongs to the CD-NTase family. E subfamily.

The enzyme catalyses 2 GTP = 3',3'-c-di-GMP + 2 diphosphate. Functionally, cyclic nucleotide synthase (second messenger synthase) of a CBASS antivirus system. CBASS (cyclic oligonucleotide-based antiphage signaling system) provides immunity against bacteriophage. The CD-NTase protein synthesizes cyclic nucleotides in response to infection; these serve as specific second messenger signals. The signals activate a diverse range of effectors, leading to bacterial cell death and thus abortive phage infection. A type I-D(GG) CBASS system. Its function is as follows. Cyclic dinucleotide synthase that catalyzes the synthesis of c-di-GMP, has no activity with other NTP substrates. The protein is c-di-GMP synthase of Flavobacteriaceae sp. genome_bin_11.